A 484-amino-acid polypeptide reads, in one-letter code: Bifunctional protein GlmU (484 aa).

Residues 1–240 are pyrophosphorylase; it reads MSNPHSSAVI…HRELAGVNDR (240 aa). Residues 12–15, K26, Q83, and 88–89 each bind UDP-N-acetyl-alpha-D-glucosamine; these read LAAG and GT. Mg(2+) is bound at residue D113. Residues G150, E165, N180, and N238 each contribute to the UDP-N-acetyl-alpha-D-glucosamine site. Mg(2+) is bound at residue N238. The tract at residues 241–261 is linker; it reads VQLAQAGKILNQRLVEDAMRN. Residues 262 to 484 form an N-acetyltransferase region; that stretch reads GATIVDPDTT…QAHAHETKEG (223 aa). Positions 343 and 361 each coordinate UDP-N-acetyl-alpha-D-glucosamine. The active-site Proton acceptor is the H373. Y376 and N387 together coordinate UDP-N-acetyl-alpha-D-glucosamine. Residues A390, 396-397, S415, and A433 each bind acetyl-CoA; that span reads NY. The tract at residues 461–484 is disordered; it reads EKNRPGTPAADAARQAHAHETKEG.

The protein in the N-terminal section; belongs to the N-acetylglucosamine-1-phosphate uridyltransferase family. In the C-terminal section; belongs to the transferase hexapeptide repeat family. Homotrimer. Mg(2+) is required as a cofactor.

The protein resides in the cytoplasm. The catalysed reaction is alpha-D-glucosamine 1-phosphate + acetyl-CoA = N-acetyl-alpha-D-glucosamine 1-phosphate + CoA + H(+). The enzyme catalyses N-acetyl-alpha-D-glucosamine 1-phosphate + UTP + H(+) = UDP-N-acetyl-alpha-D-glucosamine + diphosphate. Its pathway is nucleotide-sugar biosynthesis; UDP-N-acetyl-alpha-D-glucosamine biosynthesis; N-acetyl-alpha-D-glucosamine 1-phosphate from alpha-D-glucosamine 6-phosphate (route II): step 2/2. The protein operates within nucleotide-sugar biosynthesis; UDP-N-acetyl-alpha-D-glucosamine biosynthesis; UDP-N-acetyl-alpha-D-glucosamine from N-acetyl-alpha-D-glucosamine 1-phosphate: step 1/1. It functions in the pathway bacterial outer membrane biogenesis; LPS lipid A biosynthesis. Catalyzes the last two sequential reactions in the de novo biosynthetic pathway for UDP-N-acetylglucosamine (UDP-GlcNAc). The C-terminal domain catalyzes the transfer of acetyl group from acetyl coenzyme A to glucosamine-1-phosphate (GlcN-1-P) to produce N-acetylglucosamine-1-phosphate (GlcNAc-1-P), which is converted into UDP-GlcNAc by the transfer of uridine 5-monophosphate (from uridine 5-triphosphate), a reaction catalyzed by the N-terminal domain. This is Bifunctional protein GlmU from Corynebacterium diphtheriae (strain ATCC 700971 / NCTC 13129 / Biotype gravis).